A 551-amino-acid polypeptide reads, in one-letter code: Histone-lysine N-methyltransferase SETDB2 (551 aa).

The MBD domain occupies 146 to 210; that stretch reads LLGHNPLRAP…DRFSFSTQVC (65 aa). The Pre-SET domain occupies 269–329; that stretch reads VCCDCTDGCT…RCENRVVQKG (61 aa). Residues cysteine 271, cysteine 273, cysteine 277, cysteine 283, cysteine 285, cysteine 310, cysteine 314, cysteine 316, and cysteine 321 each coordinate Zn(2+). One can recognise an SET domain in the interval 332 to 537; the sequence is VRLQVFRTPE…AGTELTWSCT (206 aa). Residue 342-344 participates in S-adenosyl-L-methionine binding; it reads HMW. Residues 426–447 are disordered; sequence SLAQRRDQQQFSISSETEDNRC. S-adenosyl-L-methionine-binding positions include arginine 491 and 494–495; that span reads TH.

It belongs to the class V-like SAM-binding methyltransferase superfamily.

It localises to the nucleus. The protein resides in the chromosome. The catalysed reaction is N(6),N(6)-dimethyl-L-lysyl(9)-[histone H3] + S-adenosyl-L-methionine = N(6),N(6),N(6)-trimethyl-L-lysyl(9)-[histone H3] + S-adenosyl-L-homocysteine + H(+). Its function is as follows. Histone methyltransferase involved in left-right axis specification in early development and mitosis. Specifically trimethylates 'Lys-9' of histone H3 (H3K9me3). H3K9me3 represents a specific tag for epigenetic transcriptional repression by recruiting HP1 (CBX1, CBX3 and/or CBX5) proteins to methylated histones. Contributes to H3K9me3 in both the interspersed repetitive elements and centromere-associated repeats. Plays a role in chromosome condensation and segregation during mitosis. During early development, required to specify the left-right axis by repressing expression of FGF8, leading to negatively regulate the dorsal organizer formation. In Danio rerio (Zebrafish), this protein is Histone-lysine N-methyltransferase SETDB2 (setdb2).